The primary structure comprises 294 residues: 4-hydroxy-tetrahydrodipicolinate synthase (294 aa).

Residue threonine 45 coordinates pyruvate. Tyrosine 133 (proton donor/acceptor) is an active-site residue. Lysine 162 functions as the Schiff-base intermediate with substrate in the catalytic mechanism. Residue isoleucine 204 coordinates pyruvate.

This sequence belongs to the DapA family. In terms of assembly, homotetramer; dimer of dimers.

The protein localises to the cytoplasm. The catalysed reaction is L-aspartate 4-semialdehyde + pyruvate = (2S,4S)-4-hydroxy-2,3,4,5-tetrahydrodipicolinate + H2O + H(+). Its pathway is amino-acid biosynthesis; L-lysine biosynthesis via DAP pathway; (S)-tetrahydrodipicolinate from L-aspartate: step 3/4. Catalyzes the condensation of (S)-aspartate-beta-semialdehyde [(S)-ASA] and pyruvate to 4-hydroxy-tetrahydrodipicolinate (HTPA). This Bartonella henselae (strain ATCC 49882 / DSM 28221 / CCUG 30454 / Houston 1) (Rochalimaea henselae) protein is 4-hydroxy-tetrahydrodipicolinate synthase.